A 152-amino-acid polypeptide reads, in one-letter code: MSTSQTSADIQLIQRILPHRYPFLLVDKVVEIDGTTSALGIKNVTMNEPHFQGHFPGMPIMPGVTIVEAMAQTAAVMVGVTLEMADKEMKVYFMAIDKAKFRRKVIPGDVLEMRLNTLRGKPGGKVWRFGGVASVEGEMAAEVEFTAMMDMG.

Histidine 54 is a catalytic residue.

The protein belongs to the thioester dehydratase family. FabZ subfamily.

The protein resides in the cytoplasm. The enzyme catalyses a (3R)-hydroxyacyl-[ACP] = a (2E)-enoyl-[ACP] + H2O. Functionally, involved in unsaturated fatty acids biosynthesis. Catalyzes the dehydration of short chain beta-hydroxyacyl-ACPs and long chain saturated and unsaturated beta-hydroxyacyl-ACPs. The polypeptide is 3-hydroxyacyl-[acyl-carrier-protein] dehydratase FabZ (Roseobacter denitrificans (strain ATCC 33942 / OCh 114) (Erythrobacter sp. (strain OCh 114))).